Here is a 262-residue protein sequence, read N- to C-terminus: MKPLKILISNDDGVFAEGIRTLATSAASRGHKVTVVCPDQERSATGHGLTLHSPIRAEKADELFGGGIKAWGCSGTPADCVKLALNELLDQKPDLILSGINHGPNLGTDIFCSGTVAAALEGTLDGIPSIAVSVASFQWKNFSFAGKLSLDIAEKAIQQNWPKNLLLNLNIPPCEEKEMGDLVWTRLSIRQYEEQFIRRVDPRGNTYFWMAGEAVKDLQSAGEGPKGWPSDVSQIALCSPSLTPIQPDLFWRGNLDDLPNLI.

A divalent metal cation-binding residues include Asp11, Asp12, Ser43, and Asn101.

The protein belongs to the SurE nucleotidase family. A divalent metal cation serves as cofactor.

It localises to the cytoplasm. It catalyses the reaction a ribonucleoside 5'-phosphate + H2O = a ribonucleoside + phosphate. Nucleotidase that shows phosphatase activity on nucleoside 5'-monophosphates. The protein is 5'-nucleotidase SurE of Prochlorococcus marinus (strain NATL2A).